The sequence spans 131 residues: UPF0102 protein YraN (131 aa).

This sequence belongs to the UPF0102 family.

In Salmonella typhi, this protein is UPF0102 protein YraN.